A 260-amino-acid chain; its full sequence is Indole-3-glycerol phosphate synthase (260 aa).

It belongs to the TrpC family.

It catalyses the reaction 1-(2-carboxyphenylamino)-1-deoxy-D-ribulose 5-phosphate + H(+) = (1S,2R)-1-C-(indol-3-yl)glycerol 3-phosphate + CO2 + H2O. It participates in amino-acid biosynthesis; L-tryptophan biosynthesis; L-tryptophan from chorismate: step 4/5. The polypeptide is Indole-3-glycerol phosphate synthase (Bacteroides thetaiotaomicron (strain ATCC 29148 / DSM 2079 / JCM 5827 / CCUG 10774 / NCTC 10582 / VPI-5482 / E50)).